A 268-amino-acid polypeptide reads, in one-letter code: Type II methyltransferase M2.DpnII (268 aa).

This sequence belongs to the N(4)/N(6)-methyltransferase family. As to quaternary structure, homodimer.

It carries out the reaction a 2'-deoxyadenosine in DNA + S-adenosyl-L-methionine = an N(6)-methyl-2'-deoxyadenosine in DNA + S-adenosyl-L-homocysteine + H(+). In terms of biological role, a beta subtype methylase that recognizes the single- or double-stranded sequence 5'-GATC-3', methylates A-2 on one or both strands (respectively), and protects the DNA from cleavage by the DpnII endonuclease. Further methylates DNA that is already methylated at 5'-GATC-3' sites. Essential for establishment of a previously unmethylated plasmid transformed into the cell as single-stranded DNA, enhances plasmid transfer to DpnII-containing strains of Streptococcus pneumoniae. This is Type II methyltransferase M2.DpnII from Streptococcus pneumoniae.